Consider the following 419-residue polypeptide: DNA ligase (419 aa).

Residues 1-120 are NTD; the sequence is MLSQFPGQCS…ARQKRGAHTN (120 aa). The AD domain stretch occupies residues 121–317; that stretch reads RGMIPPMLVK…NYHSPHLAKL (197 aa). 4 residues coordinate ATP: His149, Lys151, Glu203, and Phe232. The active-site N6-AMP-lysine intermediate is the Lys151. Residue Glu203 participates in a divalent metal cation binding. Glu291 is a binding site for a divalent metal cation. Ile294 and Lys316 together coordinate ATP. The OB domain stretch occupies residues 318-419; sequence KPLLDAEFIL…REPINVLEII (102 aa).

It belongs to the ATP-dependent DNA ligase family. It depends on a divalent metal cation as a cofactor.

It localises to the virion. The catalysed reaction is ATP + (deoxyribonucleotide)n-3'-hydroxyl + 5'-phospho-(deoxyribonucleotide)m = (deoxyribonucleotide)n+m + AMP + diphosphate.. Very low-fidelity DNA ligase that seals nicks in double-stranded DNA during DNA repair. Together with the viral repair DNA polymerase X, fills the single nucleotide gaps generated by the AP endonuclease. It is not essential for viral replication and recombination. Displays a very low adenylation activity towards DNA with 3'-dideoxy- or 3'-amino-terminated nicks compared to regular nick DNA. The protein is DNA ligase (LIG) of Ornithodoros (relapsing fever ticks).